The chain runs to 164 residues: Nucleotide-binding protein EF_1165 (164 aa).

It belongs to the YajQ family.

In terms of biological role, nucleotide-binding protein. The sequence is that of Nucleotide-binding protein EF_1165 from Enterococcus faecalis (strain ATCC 700802 / V583).